The following is a 598-amino-acid chain: MVRDRVIELFRKALAQGADDGRWPAAGAGFSVEAPRDPKHGDFAVNAAMVLAKQAGRPPRELAQAIVEAVRAADTAGDLAGLEIAGPGFINVRLSPDLWLRTLARAVAEGPDYGRTAVGQGKKVIVEYVSANPTGPMHVGHGRNAVVGDGVQGLLRWAGFDVTREYYVNDYGAQVQTLARSVHLRYQELHGRTVTMPPKSYPGEYVKDIAAGLKAEYGARFLDAPEAEWLTLFRDHAVQHVLGMIRGDLAAVNISFDRWSSEKALYESGTVDRFLRFLEEKDLVYVGKLPPPKSKKGQPPAQPQPDEEGVTAAEDLTLFRSSAYGDEVDRPVKKADGTPTYFCADIAYHWDKRQRADALVDVLGADHGGYVPRLEAAMEALGASRKDLHVVLIQMVSLMRGGESVKMSKRAGTLVSLREVVDEVGRDATRFIFLTRRSDAPLDFDVELAKRQTLDNPVFYVQYGHARLAAIFQKAREAGHAVPDFDLEAARTLASPEEQDLIRRIAAFPDMLAAAALAYEPHRVAFYLQETIAAFHSWYTQGKKSGEKVIGPDPVKTAARLFLCRALKQVLANGLAVLGVSAPDRMESPETRDIADDV.

The 'HIGH' region signature appears at 131–141 (ANPTGPMHVGH). Positions 288–308 (KLPPPKSKKGQPPAQPQPDEE) are disordered.

The protein belongs to the class-I aminoacyl-tRNA synthetase family. As to quaternary structure, monomer.

Its subcellular location is the cytoplasm. The catalysed reaction is tRNA(Arg) + L-arginine + ATP = L-arginyl-tRNA(Arg) + AMP + diphosphate. The chain is Arginine--tRNA ligase from Anaeromyxobacter sp. (strain K).